The primary structure comprises 436 residues: UDP-N-acetylmuramate--L-alanine ligase (436 aa).

Position 111–117 (111–117 (GTHGKTS)) interacts with ATP.

It belongs to the MurCDEF family.

It localises to the cytoplasm. It carries out the reaction UDP-N-acetyl-alpha-D-muramate + L-alanine + ATP = UDP-N-acetyl-alpha-D-muramoyl-L-alanine + ADP + phosphate + H(+). Its pathway is cell wall biogenesis; peptidoglycan biosynthesis. Functionally, cell wall formation. The protein is UDP-N-acetylmuramate--L-alanine ligase of Lactiplantibacillus plantarum (strain ATCC BAA-793 / NCIMB 8826 / WCFS1) (Lactobacillus plantarum).